Reading from the N-terminus, the 92-residue chain is DNA-binding protein HU-alpha (92 aa).

The protein belongs to the bacterial histone-like protein family. As to quaternary structure, heterodimer of an alpha and a beta chain.

Functionally, histone-like DNA-binding protein which is capable of wrapping DNA to stabilize it, and thus to prevent its denaturation under extreme environmental conditions. This is DNA-binding protein HU-alpha (hupA) from Burkholderia pseudomallei (strain K96243).